Here is a 550-residue protein sequence, read N- to C-terminus: Hydroxylamine reductase (550 aa).

Positions 3, 6, 18, and 25 each coordinate [2Fe-2S] cluster. Hybrid [4Fe-2O-2S] cluster is bound by residues His-249, Glu-273, Cys-317, Cys-405, Cys-433, Cys-458, Glu-492, and Lys-494. The residue at position 405 (Cys-405) is a Cysteine persulfide.

The protein belongs to the HCP family. The cofactor is [2Fe-2S] cluster. It depends on hybrid [4Fe-2O-2S] cluster as a cofactor.

It localises to the cytoplasm. It carries out the reaction A + NH4(+) + H2O = hydroxylamine + AH2 + H(+). Its function is as follows. Catalyzes the reduction of hydroxylamine to form NH(3) and H(2)O. The sequence is that of Hydroxylamine reductase from Salmonella dublin (strain CT_02021853).